The chain runs to 70 residues: Turripeptide Gsp9.3 (70 aa).

A signal peptide spans 1 to 20 (MKVYCLLLVLLVGLVSQAHG). The Kazal-like domain maps to 21 to 70 (QLDKKCQMVCTFDYRPVCGSDGRTYPNKCTLTSTACMSQRSITVFHDGEC). Cystine bridges form between Cys26–Cys56, Cys30–Cys49, and Cys38–Cys70.

The protein belongs to the conopeptide P-like superfamily. In terms of tissue distribution, expressed by the venom duct.

The protein localises to the secreted. Functionally, acts as a neurotoxin by inhibiting an ion channel. May also act as a serine protease inhibitor, since it possess the kazal serine protease inhibitor signature. This is Turripeptide Gsp9.3 from Gemmula speciosa (Splendid gem-turris).